The chain runs to 318 residues: (1S)-1,7-diacetoxy-luvungin A aldo-keto reductase (318 aa).

Tyrosine 54 acts as the Proton donor in catalysis.

It belongs to the aldo/keto reductase family. Expressed in flowers, maturing fruits and in juice vesicles.

It carries out the reaction (1S)-1,7-diacetoxy-luvungin A + AH2 + H2O = (1R,2R,3S,8R,10R,11R,15S,16S)-3-(acetyloxy)-15-[(4R)-4-[(2S)-3,3-dimethyloxiran-2-yl]-1,4-dihydroxybutan-2-yl]-2,7,7,11,16-pentamethyl-5-oxo-6-oxatetracyclo[9.7.0.0(2,8).0(12,16)]octadec-12-en-10-yl acetate + acetate + A + H(+). Its pathway is secondary metabolite biosynthesis; terpenoid biosynthesis. In terms of biological role, aldo-keto reductase involved in the biosynthesis of limonoids triterpene natural products such as limonin, a compound with insecticidal activity responsible for the bitter taste in citrus. Can use (1S)-1,7-diacetoxy-luvungin A as substrate. This Citrus sinensis (Sweet orange) protein is (1S)-1,7-diacetoxy-luvungin A aldo-keto reductase.